A 468-amino-acid polypeptide reads, in one-letter code: Mitochondrial distribution and morphology protein 10 (468 aa).

It belongs to the MDM10 family. As to quaternary structure, component of the ER-mitochondria encounter structure (ERMES) or MDM complex, composed of MMM1, MDM10, MDM12 and MDM34. Associates with the mitochondrial outer membrane sorting assembly machinery SAM(core) complex.

It localises to the mitochondrion outer membrane. Its function is as follows. Component of the ERMES/MDM complex, which serves as a molecular tether to connect the endoplasmic reticulum and mitochondria. Components of this complex are involved in the control of mitochondrial shape and protein biogenesis and may function in phospholipid exchange. MDM10 is involved in the late assembly steps of the general translocase of the mitochondrial outer membrane (TOM complex). Functions in the TOM40-specific route of the assembly of outer membrane beta-barrel proteins, including the association of TOM40 with the receptor TOM22 and small TOM proteins. Can associate with the SAM(core) complex as well as the MDM12-MMM1 complex, both involved in late steps of the major beta-barrel assembly pathway, that is responsible for biogenesis of all outer membrane beta-barrel proteins. May act as a switch that shuttles between both complexes and channels precursor proteins into the TOM40-specific pathway. Plays a role in mitochondrial morphology and in the inheritance of mitochondria. In Blastomyces gilchristii (strain SLH14081) (Blastomyces dermatitidis), this protein is Mitochondrial distribution and morphology protein 10.